The following is a 253-amino-acid chain: NADH-quinone oxidoreductase subunit C (253 aa).

2 disordered regions span residues 1 to 33 and 234 to 253; these read MSPD…DTEP and IPVE…RAYS.

The protein belongs to the complex I 30 kDa subunit family. NDH-1 is composed of 14 different subunits. Subunits NuoB, C, D, E, F, and G constitute the peripheral sector of the complex.

It localises to the cell membrane. It catalyses the reaction a quinone + NADH + 5 H(+)(in) = a quinol + NAD(+) + 4 H(+)(out). Functionally, NDH-1 shuttles electrons from NADH, via FMN and iron-sulfur (Fe-S) centers, to quinones in the respiratory chain. The immediate electron acceptor for the enzyme in this species is believed to be a menaquinone. Couples the redox reaction to proton translocation (for every two electrons transferred, four hydrogen ions are translocated across the cytoplasmic membrane), and thus conserves the redox energy in a proton gradient. This Nocardia farcinica (strain IFM 10152) protein is NADH-quinone oxidoreductase subunit C.